The following is a 413-amino-acid chain: MREAPPFDKALGMYYYVTDTCPSGGVIKKSPEDFVVEEVLADGTVVAVGGVELRPRVGGWTWIHVVKRNVDTIRLMIRLAKALGVSPREVSVGGIKDTRAVASHIISVRGAVKGLPEIPGVKFLGMWSMDRPMSPSEIYGNRFTIVLRDVERVDCAVEALEALKSAAVPNYYGYQRFGTIRPVSHLLGRALLRKSPEEFFDAMFCKIFEHESAAAKKARELACRGEYQKALETFPRRFVEERAFLRRLAQGYDMWNAIMGIPLQILRIYVEAAQSYLFNRFLSARLELGPLDKPLEGDLVEVGGQVAYYAEGLGGDVVLPVAGAGVRMPRGKVGEALLKVMKEEGVDPAAFLKMPRGLKAYGSYRRARLEVGDFSYAVRGRDVELRFVLPRGSYATVLLREAVKPAEPYRHGF.

Asp97 serves as the catalytic Nucleophile. The 204-residue stretch at 167–370 folds into the TRUD domain; the sequence is AVPNYYGYQR…YGSYRRARLE (204 aa).

This sequence belongs to the pseudouridine synthase TruD family.

It catalyses the reaction uridine(13) in tRNA = pseudouridine(13) in tRNA. Functionally, could be responsible for synthesis of pseudouridine from uracil-13 in transfer RNAs. In Pyrobaculum arsenaticum (strain DSM 13514 / JCM 11321 / PZ6), this protein is Probable tRNA pseudouridine synthase D.